Reading from the N-terminus, the 38-residue chain is uncharacterized protein (38 aa).

This is an uncharacterized protein from Saccharomyces cerevisiae (strain ATCC 204508 / S288c) (Baker's yeast).